A 484-amino-acid polypeptide reads, in one-letter code: tRNA sulfurtransferase (484 aa).

A THUMP domain is found at 61–165 (TLLVELLGRI…NDKMMLIKAR (105 aa)). Residues 183 to 184 (LI), Lys265, Gly287, and Gln296 contribute to the ATP site. Cys344 and Cys456 are disulfide-bonded. The Rhodanese domain occupies 404 to 484 (LSANEVILDI…DNVKVLNKIS (81 aa)). Cys456 serves as the catalytic Cysteine persulfide intermediate.

Belongs to the ThiI family.

It localises to the cytoplasm. The enzyme catalyses [ThiI sulfur-carrier protein]-S-sulfanyl-L-cysteine + a uridine in tRNA + 2 reduced [2Fe-2S]-[ferredoxin] + ATP + H(+) = [ThiI sulfur-carrier protein]-L-cysteine + a 4-thiouridine in tRNA + 2 oxidized [2Fe-2S]-[ferredoxin] + AMP + diphosphate. The catalysed reaction is [ThiS sulfur-carrier protein]-C-terminal Gly-Gly-AMP + S-sulfanyl-L-cysteinyl-[cysteine desulfurase] + AH2 = [ThiS sulfur-carrier protein]-C-terminal-Gly-aminoethanethioate + L-cysteinyl-[cysteine desulfurase] + A + AMP + 2 H(+). It functions in the pathway cofactor biosynthesis; thiamine diphosphate biosynthesis. Functionally, catalyzes the ATP-dependent transfer of a sulfur to tRNA to produce 4-thiouridine in position 8 of tRNAs, which functions as a near-UV photosensor. Also catalyzes the transfer of sulfur to the sulfur carrier protein ThiS, forming ThiS-thiocarboxylate. This is a step in the synthesis of thiazole, in the thiamine biosynthesis pathway. The sulfur is donated as persulfide by IscS. The chain is tRNA sulfurtransferase from Histophilus somni (strain 2336) (Haemophilus somnus).